The sequence spans 418 residues: MRLSAGPDAGPSGNSSPWWPLATGAGNTSREAEALGEGNGPPRDVRNEELAKLEIAVLAVTFAVAVLGNSSVLLALHRTPRKTSRMHLFIRHLSLADLAVAFFQVLPQMCWDITYRFRGPDWLCRVVKHLQVFGMFASAYMLVVMTADRYIAVCHPLKTLQQPARRSRLMIAAAWVLSFVLSTPQYFVFSMIEVNNVTKARDCWATFIQPWGSRAYVTWMTGGIFVAPVVILGTCYGFICYNIWCNVRGKTASRQSKGAEQAGVAFQKGFLLAPCVSSVKSISRAKIRTVKMTFVIVTAYIVCWAPFFIIQMWSVWDPMSVWTESENPTITITALLGSLNSCCNPWIYMFFSGHLLQDCVQSFPCCQNMKEKFNKEDTDSMSRRQTFYSNNRSPTNSTGMWKDSPKSSKSIKFIPVST.

Residues 1–43 (MRLSAGPDAGPSGNSSPWWPLATGAGNTSREAEALGEGNGPPR) form a disordered region. Over 1–52 (MRLSAGPDAGPSGNSSPWWPLATGAGNTSREAEALGEGNGPPRDVRNEELAK) the chain is Extracellular. Asn27 is a glycosylation site (N-linked (GlcNAc...) asparagine). The helical transmembrane segment at 53–76 (LEIAVLAVTFAVAVLGNSSVLLAL) threads the bilayer. The Cytoplasmic segment spans residues 77–88 (HRTPRKTSRMHL). Residues 89 to 110 (FIRHLSLADLAVAFFQVLPQMC) traverse the membrane as a helical segment. The Extracellular segment spans residues 111-125 (WDITYRFRGPDWLCR). Cys124 and Cys203 are joined by a disulfide. A helical transmembrane segment spans residues 126 to 147 (VVKHLQVFGMFASAYMLVVMTA). Topologically, residues 148–168 (DRYIAVCHPLKTLQQPARRSR) are cytoplasmic. Residues 169–190 (LMIAAAWVLSFVLSTPQYFVFS) traverse the membrane as a helical segment. Over 191-218 (MIEVNNVTKARDCWATFIQPWGSRAYVT) the chain is Extracellular. N-linked (GlcNAc...) asparagine glycosylation occurs at Asn196. Residues 219 to 239 (WMTGGIFVAPVVILGTCYGFI) form a helical membrane-spanning segment. Over 240-293 (CYNIWCNVRGKTASRQSKGAEQAGVAFQKGFLLAPCVSSVKSISRAKIRTVKMT) the chain is Cytoplasmic. A helical membrane pass occupies residues 294-313 (FVIVTAYIVCWAPFFIIQMW). At 314-331 (SVWDPMSVWTESENPTIT) the chain is on the extracellular side. A helical membrane pass occupies residues 332–351 (ITALLGSLNSCCNPWIYMFF). Topologically, residues 352–418 (SGHLLQDCVQ…KSIKFIPVST (67 aa)) are cytoplasmic. S-palmitoyl cysteine attachment occurs at residues Cys365 and Cys366. The segment at 377–410 (DTDSMSRRQTFYSNNRSPTNSTGMWKDSPKSSKS) is disordered. The segment covering 383–399 (RRQTFYSNNRSPTNSTG) has biased composition (polar residues). At Ser404 the chain carries Phosphoserine.

This sequence belongs to the G-protein coupled receptor 1 family. Vasopressin/oxytocin receptor subfamily.

It localises to the cell membrane. Receptor for arginine vasopressin. The activity of this receptor is mediated by G proteins which activate a phosphatidyl-inositol-calcium second messenger system. Has been involved in social behaviors, including affiliation and attachment. This is Vasopressin V1a receptor (AVPR1A) from Homo sapiens (Human).